The primary structure comprises 32 residues: Jingzhaotoxin F4-32.60 (32 aa).

3 disulfide bridges follow: Cys-2/Cys-17, Cys-9/Cys-22, and Cys-16/Cys-29. Asp-31 is modified (aspartic acid 1-amide).

It belongs to the neurotoxin 10 (Hwtx-1) family. 30 (Jztx-14) subfamily. Amidated as well as non-amidated forms are found in the venom. As to expression, expressed by the venom gland.

The protein resides in the secreted. Functionally, probable ion channel inhibitor. The protein is Jingzhaotoxin F4-32.60 of Chilobrachys guangxiensis (Chinese earth tiger tarantula).